Consider the following 232-residue polypeptide: MAKKGKKYVEAAKLVDRAKAYDVAEAVALTKKTNTAKFDATVEVAFRLGVDPRKNDQQIRGAVVLPNGTGKTQRVLVFAKGEKAKEAEAAGADYVGDSDYIAKIQQGWFEFDVIVATPDMMGEVGKIGRVLGPKGLMPNPKTGTVTFEVEKAIGEIKAGKVEYRVDKAGNIHVPIGKVSFEDEKLVENFTTMYDTILKAKPAAAKGVYVKNVAVTSTMGPGVKVDASTFNVK.

The protein belongs to the universal ribosomal protein uL1 family. Part of the 50S ribosomal subunit.

Functionally, binds directly to 23S rRNA. The L1 stalk is quite mobile in the ribosome, and is involved in E site tRNA release. In terms of biological role, protein L1 is also a translational repressor protein, it controls the translation of the L11 operon by binding to its mRNA. This chain is Large ribosomal subunit protein uL1, found in Bacillus velezensis (strain DSM 23117 / BGSC 10A6 / LMG 26770 / FZB42) (Bacillus amyloliquefaciens subsp. plantarum).